Reading from the N-terminus, the 432-residue chain is Trigger factor (432 aa).

The region spanning 161–246 (GTRATINFVG…VVKVEARELP (86 aa)) is the PPIase FKBP-type domain.

The protein belongs to the FKBP-type PPIase family. Tig subfamily.

The protein resides in the cytoplasm. It carries out the reaction [protein]-peptidylproline (omega=180) = [protein]-peptidylproline (omega=0). Involved in protein export. Acts as a chaperone by maintaining the newly synthesized protein in an open conformation. Functions as a peptidyl-prolyl cis-trans isomerase. In Aliivibrio fischeri (strain MJ11) (Vibrio fischeri), this protein is Trigger factor.